Consider the following 355-residue polypeptide: MATIKQNIPHAHTRILGIGAYRPSEIVTNDDVCQWIESSDEWIVKRTGIHTRHRAPEDVSVLDMAEHAAREALENSGLTGEQLSTIIVSTVSFPYLTPSLAANLADRLGATPAAAYDISAACAGYCYGVAQADSLVRSGDSTNVLVIGVEKLSDVIDNHERSISFLLGDGAGAVVIGPSEVPGIGPSVWGSDGSKWDAIRMTHPLTDIRTVERGGQRTFAKDLVDPETGEMDPDATLWPTLRQDGQTVFRWASWEGARVAQEALDAAGLAPEDLAAFVPHQANMRIIDQMAKVLKLPESVIIARDIAEAGNTSAASIPLATHRLLAEHPELSGKPSLQIGFGAGLVYGAQVVLLP.

Active-site residues include Cys-122 and His-280. The interval 281-285 is ACP-binding; that stretch reads QANMR. Asn-311 is an active-site residue.

Belongs to the thiolase-like superfamily. FabH family. In terms of assembly, homodimer.

The protein localises to the cytoplasm. The catalysed reaction is malonyl-[ACP] + acetyl-CoA + H(+) = 3-oxobutanoyl-[ACP] + CO2 + CoA. The protein operates within lipid metabolism; fatty acid biosynthesis. In terms of biological role, catalyzes the condensation reaction of fatty acid synthesis by the addition to an acyl acceptor of two carbons from malonyl-ACP. Catalyzes the first condensation reaction which initiates fatty acid synthesis and may therefore play a role in governing the total rate of fatty acid production. Possesses both acetoacetyl-ACP synthase and acetyl transacylase activities. Its substrate specificity determines the biosynthesis of branched-chain and/or straight-chain of fatty acids. The polypeptide is Beta-ketoacyl-[acyl-carrier-protein] synthase III (Kocuria rhizophila (strain ATCC 9341 / DSM 348 / NBRC 103217 / DC2201)).